The following is a 290-amino-acid chain: MSENHVPAWKRIALKRQTISSGDESKEKGQSNLIDDDPLNITTHLSTGNLTKKEKKRIINGESKSSTKKGKRVSKPGTKKKEKLSKDEKNSKKNKILKDQLRYLIEFFRTKSESKFPTGILELESVKENYGDSLIKDEPSESGVVEVWKFSKQKQNWLIKHFFNLDEIPSVYNDLLLLYFRDLQGKSKEELISKCKGKLKQWNDYVEDQETKIKALIAEDKASEPINGEEKEEGEKDGNAEQGKQKEVQDEQEEVQMPNKELVQRSLKLLEIWKNDDSEQIELKNFFVDV.

Disordered stretches follow at residues 17-91 (QTIS…EKNS) and 220-259 (DKASEPINGEEKEEGEKDGNAEQGKQKEVQDEQEEVQMPN). The span at 40–50 (NITTHLSTGNL) shows a compositional bias: polar residues. Positions 66–83 (STKKGKRVSKPGTKKKEK) are enriched in basic residues. Over residues 233 to 249 (EGEKDGNAEQGKQKEVQ) the composition is skewed to basic and acidic residues.

This is an uncharacterized protein from Saccharomyces cerevisiae (strain ATCC 204508 / S288c) (Baker's yeast).